We begin with the raw amino-acid sequence, 106 residues long: uncharacterized protein (106 aa).

The next 2 helical transmembrane spans lie at 43 to 63 and 86 to 106; these read CSTI…LAIV and IPEL…FSLF.

It localises to the membrane. This is an uncharacterized protein from Saccharomyces cerevisiae (strain ATCC 204508 / S288c) (Baker's yeast).